A 544-amino-acid polypeptide reads, in one-letter code: Aspartokinase 2, chloroplastic (544 aa).

The N-terminal 84 residues, 1-84, are a transit peptide targeting the chloroplast; the sequence is MASLQLYGVK…SSGTGKELTC (84 aa). K87, G90, and S119 together coordinate ATP. Substrate is bound at residue E203. ACT domains are found at residues 401 to 479 and 481 to 544; these read IAST…RRSI and SLIG…ETDP.

Belongs to the aspartokinase family. Expressed in stems, leaves, floral organs and young seedlings.

The protein resides in the plastid. It localises to the chloroplast. It catalyses the reaction L-aspartate + ATP = 4-phospho-L-aspartate + ADP. Its pathway is amino-acid biosynthesis; L-lysine biosynthesis via DAP pathway; (S)-tetrahydrodipicolinate from L-aspartate: step 1/4. The protein operates within amino-acid biosynthesis; L-methionine biosynthesis via de novo pathway; L-homoserine from L-aspartate: step 1/3. It participates in amino-acid biosynthesis; L-threonine biosynthesis; L-threonine from L-aspartate: step 1/5. Its activity is regulated as follows. Allosterically inhibited by lysine, but not by S-adenosyl-L-methionine (SAM). K(0.5) for lysine in the presence of physiological concentrations of substrates is 12.5 uM. No inhibition by threonine or leucine and no activation or inhibition by alanine, cysteine, isoleucine, serine, valine, methionine, glutamine, asparagine, glutamic acid or arginine. In terms of biological role, involved in the first step of essential amino acids lysine, threonine, methionine and isoleucine synthesis via the aspartate-family pathway. The chain is Aspartokinase 2, chloroplastic (AK2) from Arabidopsis thaliana (Mouse-ear cress).